A 377-amino-acid chain; its full sequence is Flap endonuclease 1 (377 aa).

Positions 1–105 (MGIKGLSQVI…GELAKRASRQ (105 aa)) are N-domain. D34 lines the Mg(2+) pocket. R47 and R71 together coordinate DNA. Mg(2+) is bound at residue D87. Residues 96–115 (GELAKRASRQQKAREEREEA) form a disordered region. Positions 123–254 (MVDKFAKRTV…ARAVELIRQH (132 aa)) are I-domain. Mg(2+)-binding residues include E159, E161, D180, and D182. E159 lines the DNA pocket. 2 residues coordinate DNA: G232 and D234. D234 contacts Mg(2+). Positions 337–345 (PQGRLDSFF) are interaction with PCNA. The segment at 350-377 (STKKEKEKPKAAAKRKRDTKSSAPKKKR) is disordered. Basic residues predominate over residues 360-377 (AAAKRKRDTKSSAPKKKR).

Belongs to the XPG/RAD2 endonuclease family. FEN1 subfamily. As to quaternary structure, interacts with PCNA. Three molecules of rad2 bind to one PCNA trimer with each molecule binding to one PCNA monomer. PCNA stimulates the nuclease activity without altering cleavage specificity. Mg(2+) is required as a cofactor. Post-translationally, phosphorylated. Phosphorylation upon DNA damage induces relocalization to the nuclear plasma.

It localises to the nucleus. The protein localises to the nucleolus. The protein resides in the nucleoplasm. Its subcellular location is the mitochondrion. Structure-specific nuclease with 5'-flap endonuclease and 5'-3' exonuclease activities involved in DNA replication and repair. During DNA replication, cleaves the 5'-overhanging flap structure that is generated by displacement synthesis when DNA polymerase encounters the 5'-end of a downstream Okazaki fragment. It enters the flap from the 5'-end and then tracks to cleave the flap base, leaving a nick for ligation. Also involved in the long patch base excision repair (LP-BER) pathway, by cleaving within the apurinic/apyrimidinic (AP) site-terminated flap. Acts as a genome stabilization factor that prevents flaps from equilibrating into structures that lead to duplications and deletions. Also possesses 5'-3' exonuclease activity on nicked or gapped double-stranded DNA, and exhibits RNase H activity. Also involved in replication and repair of rDNA and in repairing mitochondrial DNA. The chain is Flap endonuclease 1 from Schizosaccharomyces japonicus (strain yFS275 / FY16936) (Fission yeast).